We begin with the raw amino-acid sequence, 253 residues long: Low affinity immunoglobulin gamma Fc region receptor III-A (253 aa).

Residues 1 to 20 (MGQPLPPVALLLLVSASSRA) form the signal peptide. The Extracellular portion of the chain corresponds to 21 to 207 (ADVPKALVLL…ISSSVLPWHQ (187 aa)). 2 consecutive Ig-like C2-type domains span residues 24–90 (PKAL…YRCQ) and 99–189 (PVQL…VTIT). Cystine bridges form between Cys47/Cys89 and Cys128/Cys172. N-linked (GlcNAc...) asparagine glycans are attached at residues Asn56, Asn63, Asn165, and Asn180. The helical transmembrane segment at 208-226 (IAFCLVMGLLLAADTGLYF) threads the bilayer. Over 227-253 (SVQRDLRSSQRARKEHTLGWSLGSQDK) the chain is Cytoplasmic.

In terms of assembly, forms a heterooligomeric complex with ITAM-containing signaling subunits FCER1G. Interacts (via transmembrane domain) with signaling subunits; this interaction is a prerequisite for receptor complex expression on the cell surface and intracellular signal transduction. Binds the Fc region of antigen-complexed IgG.

The protein resides in the cell membrane. Its function is as follows. Receptor for the invariable Fc fragment of immunoglobulin gamma (IgG). Optimally activated upon binding of clustered antigen-IgG complexes displayed on cell surfaces, triggers lysis of antibody-coated cells, a process known as antibody-dependent cellular cytotoxicity (ADCC). Does not bind free monomeric IgG, thus avoiding inappropriate effector cell activation in the absence of antigenic trigger. Mediates IgG effector functions on natural killer (NK) cells. Binds antigen-IgG complexes generated upon infection and triggers NK cell-dependent cytokine production and degranulation to limit viral load and propagation. Fc-binding subunit that associates with FCER1G adapter to form functional signaling complexes. Following the engagement of antigen-IgG complexes, triggers phosphorylation of immunoreceptor tyrosine-based activation motif (ITAM)-containing adapters with subsequent activation of phosphatidylinositol 3-kinase signaling and sustained elevation of intracellular calcium that ultimately drive NK cell activation. Mediates enhanced ADCC in response to afucosylated IgGs. This Oryctolagus cuniculus (Rabbit) protein is Low affinity immunoglobulin gamma Fc region receptor III-A.